The sequence spans 94 residues: DNA-directed RNA polymerase subunit Rpo11 (94 aa).

This sequence belongs to the archaeal Rpo11/eukaryotic RPB11/RPC19 RNA polymerase subunit family. Part of the RNA polymerase complex.

The protein resides in the cytoplasm. It catalyses the reaction RNA(n) + a ribonucleoside 5'-triphosphate = RNA(n+1) + diphosphate. Its function is as follows. DNA-dependent RNA polymerase (RNAP) catalyzes the transcription of DNA into RNA using the four ribonucleoside triphosphates as substrates. This is DNA-directed RNA polymerase subunit Rpo11 from Haloarcula marismortui (strain ATCC 43049 / DSM 3752 / JCM 8966 / VKM B-1809) (Halobacterium marismortui).